The chain runs to 176 residues: Oligoribonuclease (176 aa).

The Exonuclease domain maps to Glu-2–Met-159. Residue Tyr-117 is part of the active site.

This sequence belongs to the oligoribonuclease family.

Its subcellular location is the cytoplasm. Functionally, 3'-to-5' exoribonuclease specific for small oligoribonucleotides. The chain is Oligoribonuclease from Neisseria gonorrhoeae (strain ATCC 700825 / FA 1090).